The sequence spans 269 residues: 4-hydroxy-tetrahydrodipicolinate reductase (269 aa).

11-16 (GPIGRM) contacts NAD(+). Lys39 contacts NADP(+). NAD(+) is bound by residues 101–103 (GTT) and 125–128 (ASNF). Catalysis depends on His158, which acts as the Proton donor/acceptor. Residue His159 participates in (S)-2,3,4,5-tetrahydrodipicolinate binding. Lys162 serves as the catalytic Proton donor. (S)-2,3,4,5-tetrahydrodipicolinate is bound at residue 168–169 (GT).

This sequence belongs to the DapB family. In terms of assembly, homotetramer.

The protein resides in the cytoplasm. The catalysed reaction is (S)-2,3,4,5-tetrahydrodipicolinate + NAD(+) + H2O = (2S,4S)-4-hydroxy-2,3,4,5-tetrahydrodipicolinate + NADH + H(+). The enzyme catalyses (S)-2,3,4,5-tetrahydrodipicolinate + NADP(+) + H2O = (2S,4S)-4-hydroxy-2,3,4,5-tetrahydrodipicolinate + NADPH + H(+). The protein operates within amino-acid biosynthesis; L-lysine biosynthesis via DAP pathway; (S)-tetrahydrodipicolinate from L-aspartate: step 4/4. In terms of biological role, catalyzes the conversion of 4-hydroxy-tetrahydrodipicolinate (HTPA) to tetrahydrodipicolinate. The chain is 4-hydroxy-tetrahydrodipicolinate reductase from Buchnera aphidicola subsp. Acyrthosiphon pisum (strain Tuc7).